Here is a 474-residue protein sequence, read N- to C-terminus: Probable fucosyltransferase 9 (474 aa).

The helical; Signal-anchor for type II membrane protein transmembrane segment at 1–21 (MIKLTIAIATCLVLCLVLLLP) threads the bilayer. The Lumenal portion of the chain corresponds to 22-474 (SSNISYRHKY…LKLVDVSDEL (453 aa)). 3 N-linked (GlcNAc...) asparagine glycosylation sites follow: Asn-24, Asn-39, and Asn-208.

Belongs to the glycosyltransferase 37 family. Expressed in leaves and stems.

The protein localises to the golgi apparatus. It localises to the golgi stack membrane. The protein operates within protein modification; protein glycosylation. May be involved in cell wall biosynthesis. May act as a fucosyltransferase. The protein is Probable fucosyltransferase 9 (FUT9) of Arabidopsis thaliana (Mouse-ear cress).